The chain runs to 370 residues: Aldo-keto reductase NECHADRAFT_45914 (370 aa).

Asp78 provides a ligand contact to NADP(+). The active-site Proton donor is Tyr83. Residue His174 participates in substrate binding. Residues 204–205, Gln230, 259–269, and 333–341 contribute to the NADP(+) site; these read SS, APLASGRLARR, and STVQRIEEA.

This sequence belongs to the aldo/keto reductase family.

It functions in the pathway secondary metabolite biosynthesis. Its function is as follows. Aldo-keto reductase; part of the gene cluster that mediates the biosynthesis of sansalvamide, a cyclic pentadepsipeptide that shows promising results as potential anti-cancer drug. The nonribosmal peptide synthetase NRPS30 produces sansalvamide by incorporating successively one phenylalanine, one leucine, one alpha-hydroxyisocaproic acid (HICA), one valine and one leucine before sansalvamide is released from by cyclization by the terminal C domain of NRPS30. The HICA residue is probably provided by reduction of alpha-ketoisocaproate by the cluster-specific aldo-keto reductase (NECHADRAFT_45914). This is Aldo-keto reductase NECHADRAFT_45914 from Fusarium vanettenii (strain ATCC MYA-4622 / CBS 123669 / FGSC 9596 / NRRL 45880 / 77-13-4) (Fusarium solani subsp. pisi).